Reading from the N-terminus, the 108-residue chain is Ig kappa chain V-V region HP R16.7 (108 aa).

Residues 1-23 (DIQMTQTTSSLSASLGDRVTISC) are framework-1. C23 and C88 form a disulfide bridge. The tract at residues 24-34 (RASQDISNYLN) is complementarity-determining-1. Residues 35–49 (WYQQKPDGTVKLLIY) are framework-2. The segment at 50–56 (YTSRLHS) is complementarity-determining-2. The segment at 57–88 (GVPSRFSGSGSGTDYSLTISNLEQEDIATYFC) is framework-3. A complementarity-determining-3 region spans residues 89 to 97 (QQGNSLPRT). A framework-4 region spans residues 98–108 (FGGGTKLEIKR).

The sequence is that of Ig kappa chain V-V region HP R16.7 from Mus musculus (Mouse).